We begin with the raw amino-acid sequence, 555 residues long: Formate--tetrahydrofolate ligase (555 aa).

Position 65–72 (65–72) interacts with ATP; sequence TPAGEGKS.

This sequence belongs to the formate--tetrahydrofolate ligase family.

The catalysed reaction is (6S)-5,6,7,8-tetrahydrofolate + formate + ATP = (6R)-10-formyltetrahydrofolate + ADP + phosphate. The protein operates within one-carbon metabolism; tetrahydrofolate interconversion. The polypeptide is Formate--tetrahydrofolate ligase (Lactococcus lactis subsp. lactis (strain IL1403) (Streptococcus lactis)).